Consider the following 141-residue polypeptide: Cystatin (141 aa).

A signal peptide spans 1–26 (MVHSQLPVAGPLRLLCALLLLPSATM). The region spanning 29–129 (GGLSPRSVTD…CHFQVWSRPW (101 aa)) is the Cystatin domain. The Secondary area of contact motif lies at 73–77 (QVVSG). 2 cysteine pairs are disulfide-bonded: Cys-91–Cys-107 and Cys-120–Cys-140.

The protein belongs to the cystatin family. As to expression, expressed at a low level by the venom gland (at protein level).

It is found in the secreted. In terms of biological role, inhibits various C1 cysteine proteases including cathepsin L, papain and cathepsin B. This protein has no toxic activity and its function in the venom is unknown. It may play a role as a housekeeping or regulatory protein. In Pseudechis australis (Mulga snake), this protein is Cystatin.